A 424-amino-acid chain; its full sequence is Glutamyl-tRNA(Gln) amidotransferase subunit D (424 aa).

Residues 58–79 are disordered; that stretch reads NTNGGLNGGKEHKTAGEEVQKS. Residues 66–78 are compositionally biased toward basic and acidic residues; sequence GKEHKTAGEEVQK. One can recognise an Asparaginase/glutaminase domain in the interval 84-406; that stretch reads PKVAILSTGG…LGQTDEFNEA (323 aa). Active-site residues include Thr-94, Thr-170, Asp-171, and Lys-247.

Belongs to the asparaginase 1 family. GatD subfamily. As to quaternary structure, heterodimer of GatD and GatE.

It catalyses the reaction L-glutamyl-tRNA(Gln) + L-glutamine + ATP + H2O = L-glutaminyl-tRNA(Gln) + L-glutamate + ADP + phosphate + H(+). Functionally, allows the formation of correctly charged Gln-tRNA(Gln) through the transamidation of misacylated Glu-tRNA(Gln) in organisms which lack glutaminyl-tRNA synthetase. The reaction takes place in the presence of glutamine and ATP through an activated gamma-phospho-Glu-tRNA(Gln). The GatDE system is specific for glutamate and does not act on aspartate. This Methanosarcina barkeri (strain Fusaro / DSM 804) protein is Glutamyl-tRNA(Gln) amidotransferase subunit D.